A 558-amino-acid polypeptide reads, in one-letter code: Glucose-6-phosphate isomerase (558 aa).

Ala-2 bears the N-acetylalanine mark. Lys-12 carries the post-translational modification N6-acetyllysine. Lys-34 carries the N6-(2-hydroxyisobutyryl)lysine modification. Phosphoserine is present on Ser-107. Thr-109 bears the Phosphothreonine mark. Lys-142 carries the N6-acetyllysine modification. D-glucose 6-phosphate is bound at residue 159 to 160 (GS). Ser-185 bears the Phosphoserine; by CK2 mark. 210 to 215 (SKTFTT) provides a ligand contact to D-glucose 6-phosphate. The residue at position 250 (Thr-250) is a Phosphothreonine. Residues Gln-354, Glu-358, and His-389 each coordinate D-glucose 6-phosphate. The Proton donor role is filled by Glu-358. His-389 is an active-site residue. N6-acetyllysine; alternate is present on Lys-454. Lys-454 is modified (N6-malonyllysine; alternate). Lys-454 is subject to N6-succinyllysine; alternate. Position 455 is a phosphoserine (Ser-455). D-glucose 6-phosphate is bound at residue Lys-519. The active site involves Lys-519.

The protein belongs to the GPI family. In terms of assembly, homodimer; in the catalytically active form. Monomer in the secreted form. Post-translationally, phosphorylation at Ser-185 by CK2 has been shown to decrease enzymatic activity and may contribute to secretion by a non-classical secretory pathway. ISGylated.

The protein localises to the cytoplasm. It is found in the secreted. The catalysed reaction is alpha-D-glucose 6-phosphate = beta-D-fructose 6-phosphate. The protein operates within carbohydrate degradation; glycolysis; D-glyceraldehyde 3-phosphate and glycerone phosphate from D-glucose: step 2/4. Its function is as follows. In the cytoplasm, catalyzes the conversion of glucose-6-phosphate to fructose-6-phosphate, the second step in glycolysis, and the reverse reaction during gluconeogenesis. Besides it's role as a glycolytic enzyme, also acts as a secreted cytokine: acts as an angiogenic factor (AMF) that stimulates endothelial cell motility. Acts as a neurotrophic factor, neuroleukin, for spinal and sensory neurons. It is secreted by lectin-stimulated T-cells and induces immunoglobulin secretion. The polypeptide is Glucose-6-phosphate isomerase (Macaca fascicularis (Crab-eating macaque)).